We begin with the raw amino-acid sequence, 188 residues long: Protein CRIPTO3 (188 aa).

Positions 78–107 (LNRTCCLNGGTCMLESFCACPPSFYGRNCE) constitute an EGF-like domain. Asn79 is a glycosylation site (N-linked (GlcNAc...) asparagine). Intrachain disulfides connect Cys82–Cys89, Cys83–Cys95, Cys97–Cys106, Cys115–Cys133, Cys128–Cys149, and Cys131–Cys140.

It belongs to the EGF-CFC (Cripto-1/FRL1/Cryptic) family. In terms of tissue distribution, expressed weakly in lung, colon and breast. Expressed also strongly in primary cancer tissues; lung and colon cancers.

The protein resides in the cell membrane. In terms of biological role, could play a role in the determination of the epiblastic cells that subsequently give rise to the mesoderm. Activates the Nodal-dependent signaling pathway. The polypeptide is Protein CRIPTO3 (Homo sapiens (Human)).